The sequence spans 317 residues: Porphobilinogen deaminase (317 aa).

Cys-245 is modified (S-(dipyrrolylmethanemethyl)cysteine).

The protein belongs to the HMBS family. In terms of assembly, monomer. Dipyrromethane serves as cofactor.

It catalyses the reaction 4 porphobilinogen + H2O = hydroxymethylbilane + 4 NH4(+). It participates in porphyrin-containing compound metabolism; protoporphyrin-IX biosynthesis; coproporphyrinogen-III from 5-aminolevulinate: step 2/4. It functions in the pathway porphyrin-containing compound metabolism; chlorophyll biosynthesis. Functionally, tetrapolymerization of the monopyrrole PBG into the hydroxymethylbilane pre-uroporphyrinogen in several discrete steps. This chain is Porphobilinogen deaminase, found in Synechococcus sp. (strain CC9902).